The chain runs to 268 residues: Nickel import ATP-binding protein NikE (268 aa).

Positions 4-252 constitute an ABC transporter domain; that stretch reads LNVCGLSHHY…SSDAGRVLQN (249 aa). 45–52 provides a ligand contact to ATP; the sequence is GRSGCGKS.

This sequence belongs to the ABC transporter superfamily. Nickel importer (TC 3.A.1.5.3) family. In terms of assembly, the complex is composed of two ATP-binding proteins (NikD and NikE), two transmembrane proteins (NikB and NikC) and a solute-binding protein (NikA).

It is found in the cell inner membrane. It carries out the reaction Ni(2+)(out) + ATP + H2O = Ni(2+)(in) + ADP + phosphate + H(+). Functionally, part of the ABC transporter complex NikABCDE involved in nickel import. Responsible for energy coupling to the transport system. This Shigella flexneri serotype 5b (strain 8401) protein is Nickel import ATP-binding protein NikE.